A 795-amino-acid polypeptide reads, in one-letter code: Phenylalanine--tRNA ligase beta subunit (795 aa).

The region spanning 39-148 (AGSFHGVVVG…ADAPIGTDIR (110 aa)) is the tRNA-binding domain. The 76-residue stretch at 401–476 (PKRATITLRR…RVYGYNNIPD (76 aa)) folds into the B5 domain. The Mg(2+) site is built by D454, D460, E463, and E464. In terms of domain architecture, FDX-ACB spans 701 to 794 (SRFPANRRDI…LKERFQASLR (94 aa)).

Belongs to the phenylalanyl-tRNA synthetase beta subunit family. Type 1 subfamily. In terms of assembly, tetramer of two alpha and two beta subunits. Mg(2+) serves as cofactor.

It is found in the cytoplasm. The catalysed reaction is tRNA(Phe) + L-phenylalanine + ATP = L-phenylalanyl-tRNA(Phe) + AMP + diphosphate + H(+). The sequence is that of Phenylalanine--tRNA ligase beta subunit from Shigella sonnei (strain Ss046).